The chain runs to 479 residues: UDP-glycosyltransferase 71B6 (479 aa).

UDP-alpha-D-glucose is bound by residues S275, 342–344, 359–367, and 381–384; these read AEQ, HGGWNSTLE, and YAEQ.

Belongs to the UDP-glycosyltransferase family.

Its function is as follows. Glucosyltransferase that glucosylates the (+) enantiomer of abscisic acid ((+)-ABA). Is not active on structural analogs with alterations to the 8'- and 9'- methyl groups. The chain is UDP-glycosyltransferase 71B6 (UGT71B6) from Arabidopsis thaliana (Mouse-ear cress).